The following is a 144-amino-acid chain: Putative golgin subfamily A member 2B (144 aa).

2 disordered regions span residues 1 to 20 (MDSEEEEEVPQPMPSIPEDL) and 95 to 132 (SCGRVHRTVPEPEGSAEGGGVHQQAGPGQGRGEGEAAG). The segment covering 110-131 (AEGGGVHQQAGPGQGRGEGEAA) has biased composition (gly residues).

It belongs to the GOLGA2 family.

The chain is Putative golgin subfamily A member 2B (GOLGA2P5) from Homo sapiens (Human).